Here is a 602-residue protein sequence, read N- to C-terminus: Elongation factor 4 (602 aa).

Residues 7-189 (SRIRNFSIIA…SIVQQVPPPA (183 aa)) enclose the tr-type G domain. Residues 19–24 (DHGKST) and 136–139 (NKID) contribute to the GTP site.

Belongs to the TRAFAC class translation factor GTPase superfamily. Classic translation factor GTPase family. LepA subfamily.

Its subcellular location is the cell inner membrane. The catalysed reaction is GTP + H2O = GDP + phosphate + H(+). Required for accurate and efficient protein synthesis under certain stress conditions. May act as a fidelity factor of the translation reaction, by catalyzing a one-codon backward translocation of tRNAs on improperly translocated ribosomes. Back-translocation proceeds from a post-translocation (POST) complex to a pre-translocation (PRE) complex, thus giving elongation factor G a second chance to translocate the tRNAs correctly. Binds to ribosomes in a GTP-dependent manner. The sequence is that of Elongation factor 4 from Picosynechococcus sp. (strain ATCC 27264 / PCC 7002 / PR-6) (Agmenellum quadruplicatum).